Here is an 808-residue protein sequence, read N- to C-terminus: Phospholipase D alpha 1 (808 aa).

The C2 domain occupies 1–125 (MAHYLMHGTL…IRGDQVDRWV (125 aa)). Asp-186 is a Ca(2+) binding site. The PLD phosphodiesterase 1 domain occupies 326-364 (TMFTHHQKIVVVDGEMPSGESQMRRIVSFVGGIDLCDGR). Active-site residues include His-331, Lys-333, and Asp-338. His-331 provides a ligand contact to a 1,2-diacyl-sn-glycero-3-phosphate. The Ca(2+) site is built by His-370 and His-404. A 1,2-diacyl-sn-glycero-3-phosphate is bound by residues Gln-520 and His-659. The region spanning 654-681 (FMIYVHTKMMIVDDEYIIVGSANINQRS) is the PLD phosphodiesterase 2 domain. Active-site residues include His-659, Lys-661, and Asp-666. Glu-720 is a Ca(2+) binding site.

It belongs to the phospholipase D family. C2-PLD subfamily. The cofactor is Ca(2+).

It carries out the reaction a 1,2-diacyl-sn-glycero-3-phosphocholine + H2O = a 1,2-diacyl-sn-glycero-3-phosphate + choline + H(+). Functionally, hydrolyzes glycerol-phospholipids at the terminal phosphodiesteric bond. Plays an important role in various cellular processes. The sequence is that of Phospholipase D alpha 1 from Carica papaya (Papaya).